The chain runs to 168 residues: Large ribosomal subunit protein uL10 (168 aa).

Belongs to the universal ribosomal protein uL10 family. Part of the ribosomal stalk of the 50S ribosomal subunit. The N-terminus interacts with L11 and the large rRNA to form the base of the stalk. The C-terminus forms an elongated spine to which L12 dimers bind in a sequential fashion forming a multimeric L10(L12)X complex.

Functionally, forms part of the ribosomal stalk, playing a central role in the interaction of the ribosome with GTP-bound translation factors. This Ralstonia nicotianae (strain ATCC BAA-1114 / GMI1000) (Ralstonia solanacearum) protein is Large ribosomal subunit protein uL10.